The sequence spans 197 residues: Imidazoleglycerol-phosphate dehydratase (197 aa).

It belongs to the imidazoleglycerol-phosphate dehydratase family.

Its subcellular location is the cytoplasm. It catalyses the reaction D-erythro-1-(imidazol-4-yl)glycerol 3-phosphate = 3-(imidazol-4-yl)-2-oxopropyl phosphate + H2O. It participates in amino-acid biosynthesis; L-histidine biosynthesis; L-histidine from 5-phospho-alpha-D-ribose 1-diphosphate: step 6/9. The polypeptide is Imidazoleglycerol-phosphate dehydratase (Leptospira biflexa serovar Patoc (strain Patoc 1 / Ames)).